Here is a 379-residue protein sequence, read N- to C-terminus: Homoserine O-succinyltransferase (379 aa).

One can recognise an AB hydrolase-1 domain in the interval 51–360 (NAVLICHALS…DAPQGHDAFL (310 aa)). Residue serine 157 is the Nucleophile of the active site. Arginine 227 is a binding site for substrate. Catalysis depends on residues aspartate 323 and histidine 356. Aspartate 357 is a substrate binding site.

The protein belongs to the AB hydrolase superfamily. MetX family. Homodimer.

It is found in the cytoplasm. It carries out the reaction L-homoserine + succinyl-CoA = O-succinyl-L-homoserine + CoA. It participates in amino-acid biosynthesis; L-methionine biosynthesis via de novo pathway; O-succinyl-L-homoserine from L-homoserine: step 1/1. Transfers a succinyl group from succinyl-CoA to L-homoserine, forming succinyl-L-homoserine. The protein is Homoserine O-succinyltransferase of Stutzerimonas stutzeri (strain A1501) (Pseudomonas stutzeri).